The sequence spans 381 residues: Cobalt-precorrin-5B C(1)-methyltransferase (381 aa).

The protein belongs to the CbiD family.

The catalysed reaction is Co-precorrin-5B + S-adenosyl-L-methionine = Co-precorrin-6A + S-adenosyl-L-homocysteine. It functions in the pathway cofactor biosynthesis; adenosylcobalamin biosynthesis; cob(II)yrinate a,c-diamide from sirohydrochlorin (anaerobic route): step 6/10. Catalyzes the methylation of C-1 in cobalt-precorrin-5B to form cobalt-precorrin-6A. The polypeptide is Cobalt-precorrin-5B C(1)-methyltransferase (Prochlorococcus marinus (strain NATL2A)).